The sequence spans 333 residues: Adenosine deaminase (333 aa).

Positions 12 and 14 each coordinate Zn(2+). Substrate is bound by residues histidine 14, aspartate 16, and glycine 170. Position 197 (histidine 197) interacts with Zn(2+). The active-site Proton donor is the glutamate 200. Aspartate 278 lines the Zn(2+) pocket. Aspartate 279 lines the substrate pocket.

This sequence belongs to the metallo-dependent hydrolases superfamily. Adenosine and AMP deaminases family. Adenosine deaminase subfamily. The cofactor is Zn(2+).

The enzyme catalyses adenosine + H2O + H(+) = inosine + NH4(+). It catalyses the reaction 2'-deoxyadenosine + H2O + H(+) = 2'-deoxyinosine + NH4(+). In terms of biological role, catalyzes the hydrolytic deamination of adenosine and 2-deoxyadenosine. The polypeptide is Adenosine deaminase (Salmonella dublin (strain CT_02021853)).